The following is a 413-amino-acid chain: Putative F-box protein At3g58820 (413 aa).

The F-box domain maps to 1-48 (MDGVSSLPNELLCHILSFLTTKEAALTSILSKRWRNLIAFVPNLYIDD).

The protein is Putative F-box protein At3g58820 of Arabidopsis thaliana (Mouse-ear cress).